Here is a 156-residue protein sequence, read N- to C-terminus: Small ribosomal subunit protein uS7 (156 aa).

This sequence belongs to the universal ribosomal protein uS7 family. Part of the 30S ribosomal subunit. Contacts proteins S9 and S11.

One of the primary rRNA binding proteins, it binds directly to 16S rRNA where it nucleates assembly of the head domain of the 30S subunit. Is located at the subunit interface close to the decoding center, probably blocks exit of the E-site tRNA. This Alkalilimnicola ehrlichii (strain ATCC BAA-1101 / DSM 17681 / MLHE-1) protein is Small ribosomal subunit protein uS7.